The following is a 124-amino-acid chain: UPF0102 protein Noca_3248 (124 aa).

It belongs to the UPF0102 family.

In Nocardioides sp. (strain ATCC BAA-499 / JS614), this protein is UPF0102 protein Noca_3248.